The sequence spans 379 residues: Deoxyuridine 5'-triphosphate nucleotidohydrolase (379 aa).

The protein belongs to the dUTPase family. It depends on Mg(2+) as a cofactor.

The catalysed reaction is dUTP + H2O = dUMP + diphosphate + H(+). Its function is as follows. Involved in nucleotide metabolism: produces dUMP, the immediate precursor of thymidine nucleotides and decreases the intracellular concentration of dUTP to avoid uracil incorporation into viral DNA. This is Deoxyuridine 5'-triphosphate nucleotidohydrolase from Human herpesvirus 7 (strain JI) (HHV-7).